The primary structure comprises 209 residues: Ribosomal RNA large subunit methyltransferase E (209 aa).

The S-adenosyl-L-methionine site is built by Gly-63, Trp-65, Asp-83, Asp-99, and Asp-124. Catalysis depends on Lys-164, which acts as the Proton acceptor.

It belongs to the class I-like SAM-binding methyltransferase superfamily. RNA methyltransferase RlmE family.

It is found in the cytoplasm. It catalyses the reaction uridine(2552) in 23S rRNA + S-adenosyl-L-methionine = 2'-O-methyluridine(2552) in 23S rRNA + S-adenosyl-L-homocysteine + H(+). Functionally, specifically methylates the uridine in position 2552 of 23S rRNA at the 2'-O position of the ribose in the fully assembled 50S ribosomal subunit. In Photorhabdus laumondii subsp. laumondii (strain DSM 15139 / CIP 105565 / TT01) (Photorhabdus luminescens subsp. laumondii), this protein is Ribosomal RNA large subunit methyltransferase E.